The following is an 81-amino-acid chain: Small ribosomal subunit protein bS18 (81 aa).

This sequence belongs to the bacterial ribosomal protein bS18 family. Part of the 30S ribosomal subunit. Forms a tight heterodimer with protein bS6.

Binds as a heterodimer with protein bS6 to the central domain of the 16S rRNA, where it helps stabilize the platform of the 30S subunit. The chain is Small ribosomal subunit protein bS18 from Chlamydia muridarum (strain MoPn / Nigg).